The primary structure comprises 143 residues: Large-conductance mechanosensitive channel (143 aa).

Helical transmembrane passes span 10-30, 40-60, and 86-106; these read FAVKGNVIDLAVGVIIGGAFG, VIMPIVGLVFGRLDFSNLFLV, and GSFITVAVNFLILAFIIFMMV.

The protein belongs to the MscL family. As to quaternary structure, homopentamer.

The protein resides in the cell inner membrane. Channel that opens in response to stretch forces in the membrane lipid bilayer. May participate in the regulation of osmotic pressure changes within the cell. This is Large-conductance mechanosensitive channel from Paracidovorax citrulli (strain AAC00-1) (Acidovorax citrulli).